Reading from the N-terminus, the 363-residue chain is 1-aminocyclopropane-1-carboxylate oxidase homolog (363 aa).

The Fe2OG dioxygenase domain maps to Phe-212–Ser-312. The Fe cation site is built by His-236, Asp-238, and His-292.

It belongs to the iron/ascorbate-dependent oxidoreductase family.

This chain is 1-aminocyclopropane-1-carboxylate oxidase homolog (ACO3), found in Solanum lycopersicum (Tomato).